A 398-amino-acid chain; its full sequence is Probable aminomethyltransferase (398 aa).

The protein belongs to the GcvT family. The glycine cleavage system is composed of four proteins: P, T, L and H.

It catalyses the reaction N(6)-[(R)-S(8)-aminomethyldihydrolipoyl]-L-lysyl-[protein] + (6S)-5,6,7,8-tetrahydrofolate = N(6)-[(R)-dihydrolipoyl]-L-lysyl-[protein] + (6R)-5,10-methylene-5,6,7,8-tetrahydrofolate + NH4(+). Its function is as follows. The glycine cleavage system catalyzes the degradation of glycine. The polypeptide is Probable aminomethyltransferase (Pyrococcus horikoshii (strain ATCC 700860 / DSM 12428 / JCM 9974 / NBRC 100139 / OT-3)).